Here is a 57-residue protein sequence, read N- to C-terminus: Potassium channel toxin alpha-KTx 8.7 (57 aa).

The N-terminal stretch at 1–28 (MSRLYAIILIALVFNVIMTIMPDMKVEA) is a signal peptide. 3 cysteine pairs are disulfide-bonded: C31-C47, C34-C52, and C38-C54.

As to expression, expressed by the venom gland.

It is found in the secreted. In terms of biological role, inhibits voltage-gated potassium channel rKv1.1/KCNA1 at nanomolar ranges (IC(50)=8.5 nM). This Mesobuthus eupeus (Lesser Asian scorpion) protein is Potassium channel toxin alpha-KTx 8.7.